Here is a 533-residue protein sequence, read N- to C-terminus: Putative adhesin domain-containing protein LiaX (533 aa).

Residues 1–277 (MKERERVLEL…EFNYPNPQAS (277 aa)) are binds the antibiotic daptomycin (DAP) and the antimicrobial peptide human LL-37, under physiologically relevant concentrations. Protects the OG1RF and S613 strains from LL-37-mediated killing in a concentration-dependent manner. The interval 63-89 (NALEKGESEGPTVDSFEENTQDSAEKD) is disordered. Residues 83-186 (QDSAEKDREN…EEELKNIRKE (104 aa)) adopt a coiled-coil conformation. Residues 279–526 (IDVKVANGTV…INASTTTGSI (248 aa)) are putative adhesin region. The segment at 289–526 (VFKTWDQEDV…INASTTTGSI (238 aa)) is involved in cell membrane remodeling.

In terms of processing, may undergo proteolytic cleavage, allowing release of the N-terminal region into the extracellular environment.

It localises to the secreted. It is found in the cell wall. The protein resides in the cell membrane. Involved in cell membrane remodeling, perhaps acting by negative modulation of the liaFSR and liaXYZ gene clusters, thereby regulating content and localization of anionic phospholipids. Binds to the antibiotic daptomycin (DAP) and to cationic antimicrobial peptides, such as human LL-37, perhaps functioning as a sensor that activates the cell envelope stress response. The polypeptide is Putative adhesin domain-containing protein LiaX (Enterococcus faecalis (strain ATCC 700802 / V583)).